We begin with the raw amino-acid sequence, 287 residues long: MFEKTRDMDVRCNIEENGRISKPKDNKEIRESQSKMPSTYPAPGSSEGCAKNKSSSAVDPEYCRRILVRDAKGSLREIILPKGLDLDRPKRTRTSFTAEQLYRLEMEFQRCQYVVGRERTELARQLNLSETQVKVWFQNRRTKQKKDQGKDSELRSVVSETAATCSVLRLLEQGRLLSPPGLPGLMPPCTTGTLRAPNSSGPGTTSLPTVTNTHPHQPGLHPSPTGHNIFNMPVPSLLGTVANRLSSHPLTMAGNLQELSARYLSSSAFEPYSRSISKDSLDKKLLD.

Residues 1-33 are compositionally biased toward basic and acidic residues; that stretch reads MFEKTRDMDVRCNIEENGRISKPKDNKEIRESQ. The interval 1–55 is disordered; sequence MFEKTRDMDVRCNIEENGRISKPKDNKEIRESQSKMPSTYPAPGSSEGCAKNKSS. Positions 89–148 form a DNA-binding region, homeobox; sequence PKRTRTSFTAEQLYRLEMEFQRCQYVVGRERTELARQLNLSETQVKVWFQNRRTKQKKDQ.

Belongs to the EMX homeobox family.

Its subcellular location is the nucleus. Functionally, involved in ventral eye development. The sequence is that of Ventral anterior homeobox 1b (vax1-b) from Xenopus laevis (African clawed frog).